The sequence spans 190 residues: Probable E3 ubiquitin-protein ligase RHB1A (190 aa).

The segment at 139-180 (CPICFEDYDVENPRLTTKCEHEFHLSCLLEWIERSDRCPICD) adopts an RING-type; atypical zinc-finger fold.

The catalysed reaction is S-ubiquitinyl-[E2 ubiquitin-conjugating enzyme]-L-cysteine + [acceptor protein]-L-lysine = [E2 ubiquitin-conjugating enzyme]-L-cysteine + N(6)-ubiquitinyl-[acceptor protein]-L-lysine.. Its pathway is protein modification; protein ubiquitination. Its function is as follows. Probable E3 ubiquitin-protein ligase that may possess E3 ubiquitin ligase activity in vitro. This Arabidopsis thaliana (Mouse-ear cress) protein is Probable E3 ubiquitin-protein ligase RHB1A.